The primary structure comprises 347 residues: NADH-ubiquinone oxidoreductase chain 2 (347 aa).

Helical transmembrane passes span 4–21 (LALIMITTTIILGTVIVM), 26–44 (WLLVWIGFEMNMLAVIPVL), 59–79 (YFLTQATASMLLMLAVVTNLL), 93–115 (LASTVMTLALAMKLGLSPFHFWV), 149–169 (LNLNLLLAMATVSVAVGGWGG), 178–198 (ILAYSSIAHMGWMTIILTYNP), 200–220 (LTLLNLLLYILMTATTFMLFM), 241–261 (ATSVLIIMLSLGGLPPLSGFL), 274–294 (ESIFLPTLMAMMALLSLYFYM), and 323–343 (TPLLSPLIVMSTLALPLAPIL).

This sequence belongs to the complex I subunit 2 family. In terms of assembly, core subunit of respiratory chain NADH dehydrogenase (Complex I) which is composed of 45 different subunits. Interacts with TMEM242.

The protein localises to the mitochondrion inner membrane. It catalyses the reaction a ubiquinone + NADH + 5 H(+)(in) = a ubiquinol + NAD(+) + 4 H(+)(out). Core subunit of the mitochondrial membrane respiratory chain NADH dehydrogenase (Complex I) which catalyzes electron transfer from NADH through the respiratory chain, using ubiquinone as an electron acceptor. Essential for the catalytic activity and assembly of complex I. In Cardioderma cor (Heart-nosed bat), this protein is NADH-ubiquinone oxidoreductase chain 2.